Here is a 436-residue protein sequence, read N- to C-terminus: Protein Z-dependent protease inhibitor (436 aa).

The first 20 residues, 1-20 (MRVVSSLFLPVLLAEVWLVS), serve as a signal peptide directing secretion. N-linked (GlcNAc...) asparagine glycans are attached at residues asparagine 23, asparagine 42, and asparagine 69. Residues 128–145 (AGPLILPALFKRVKETFS) are heparin-binding. N-linked (GlcNAc...) asparagine glycosylation is found at asparagine 172, asparagine 189, and asparagine 287.

Belongs to the serpin family. Phosphorylated by FAM20C in the extracellular medium. In terms of tissue distribution, expressed by the liver and secreted in plasma.

Its subcellular location is the secreted. Its function is as follows. Inhibits activity of the coagulation protease factor Xa in the presence of PROZ, calcium and phospholipids. Also inhibits factor XIa in the absence of cofactors. In Rattus norvegicus (Rat), this protein is Protein Z-dependent protease inhibitor (Serpina10).